We begin with the raw amino-acid sequence, 253 residues long: Phosphonates import ATP-binding protein PhnC (253 aa).

The region spanning 4–247 (VRFEGVTKRF…QAVAMIYRAG (244 aa)) is the ABC transporter domain. 36 to 43 (GLSGSGKS) serves as a coordination point for ATP.

The protein belongs to the ABC transporter superfamily. Phosphonates importer (TC 3.A.1.9.1) family. As to quaternary structure, the complex is composed of two ATP-binding proteins (PhnC), two transmembrane proteins (PhnE) and a solute-binding protein (PhnD).

The protein resides in the cell membrane. The catalysed reaction is phosphonate(out) + ATP + H2O = phosphonate(in) + ADP + phosphate + H(+). Its function is as follows. Part of the ABC transporter complex PhnCDE involved in phosphonates import. Responsible for energy coupling to the transport system. This is Phosphonates import ATP-binding protein PhnC from Frankia casuarinae (strain DSM 45818 / CECT 9043 / HFP020203 / CcI3).